Consider the following 158-residue polypeptide: Large ribosomal subunit protein uL30 (158 aa).

Belongs to the universal ribosomal protein uL30 family. As to quaternary structure, part of the 50S ribosomal subunit.

In Saccharolobus islandicus (strain Y.N.15.51 / Yellowstone #2) (Sulfolobus islandicus), this protein is Large ribosomal subunit protein uL30.